The chain runs to 247 residues: Ribonuclease PH (247 aa).

Phosphate is bound by residues Arg87 and Gly125 to Arg127.

It belongs to the RNase PH family. In terms of assembly, homohexameric ring arranged as a trimer of dimers.

It catalyses the reaction tRNA(n+1) + phosphate = tRNA(n) + a ribonucleoside 5'-diphosphate. Its function is as follows. Phosphorolytic 3'-5' exoribonuclease that plays an important role in tRNA 3'-end maturation. Removes nucleotide residues following the 3'-CCA terminus of tRNAs; can also add nucleotides to the ends of RNA molecules by using nucleoside diphosphates as substrates, but this may not be physiologically important. Probably plays a role in initiation of 16S rRNA degradation (leading to ribosome degradation) during starvation. The polypeptide is Ribonuclease PH (Frankia casuarinae (strain DSM 45818 / CECT 9043 / HFP020203 / CcI3)).